A 933-amino-acid chain; its full sequence is Serine/threonine-protein kinase EDR1 (933 aa).

Basic residues predominate over residues 1–10 (MKHIFKKLHR). Disordered regions lie at residues 1–74 (MKHI…ADYM), 342–424 (CNSN…TAIG), 527–550 (HRDP…AISS), and 604–650 (HGQQ…YRND). Over residues 37 to 48 (NPPQATPSSVTE) the composition is skewed to polar residues. The span at 53 to 68 (AGATSSMASPAPTAAS) shows a compositional bias: low complexity. Residues 342 to 356 (CNSNGNKFPTAQFSN) show a composition bias toward polar residues. Over residues 367 to 378 (SSHSSMANYSSS) the composition is skewed to low complexity. The segment covering 379–389 (LDRRTEAERTD) has biased composition (basic and acidic residues). The segment covering 404 to 413 (SSPSSVTSST) has biased composition (low complexity). Over residues 533–550 (GNTQSSYATSSSNGAISS) the composition is skewed to polar residues. Residues 607–621 (QNDESHIHDHRKYTS) show a composition bias toward basic and acidic residues. Residues 669-925 (LVIAERIGLG…QLTEVLKPLN (257 aa)) enclose the Protein kinase domain. Residues 675-683 (IGLGSYGEV) and K696 each bind ATP. Residue D792 is the Proton acceptor of the active site.

It belongs to the protein kinase superfamily. TKL Ser/Thr protein kinase family. RAF subfamily. In terms of assembly, interacts with KEG. Binds and recruited by EDR4 at the powdery mildew (e.g. G.cichoracearum) penetration site on the plasma membrane. Post-translationally, autophosphorylated.

The protein localises to the cell membrane. The protein resides in the endosome. It is found in the nucleus. Its subcellular location is the endoplasmic reticulum. It localises to the golgi apparatus. The protein localises to the trans-Golgi network. The protein resides in the early endosome. The catalysed reaction is L-seryl-[protein] + ATP = O-phospho-L-seryl-[protein] + ADP + H(+). It carries out the reaction L-threonyl-[protein] + ATP = O-phospho-L-threonyl-[protein] + ADP + H(+). Functionally, MAPKKK serine/threonine-protein kinase involved in the regulation of a MAP kinase cascade (probably including MPK3 and MPK6) that negatively regulates salicylic acid- (SA-) dependent defense responses, abscisic acid (ABA) signaling, and ethylene-induced senescence. Also modulates stress response (e.g. drought) signaling and cell death, in an ORE9-dependent manner. Functions at a point of cross talk between ethylene, ABA and SA signaling that impinges on senescence and cell death. On the other hand, it confers sensitivity to various pathogens such as the fungus E.cichoracearum, the oomycete H.parasitica and the bacteria P.syringae pv. tomato DC3000. Required for resistance to some hemibiotrophic/necrotrophic fungal pathogens (e.g. C.gloeosporioides, C.higginsianum and A.brassicicola) through the induction of defensin expression, probably by repressing MYC2, an inhibitor of defensin genes (PDFs). Together with KEG, may regulate endocytic trafficking and/or the formation of signaling complexes on trans-Golgi network (TGN)/ early endosome (EE) vesicles during stress responses. The sequence is that of Serine/threonine-protein kinase EDR1 (EDR1) from Arabidopsis thaliana (Mouse-ear cress).